Reading from the N-terminus, the 413-residue chain is Cell division protein FtsA (413 aa).

It belongs to the FtsA/MreB family. As to quaternary structure, self-interacts. Interacts with FtsZ.

The protein resides in the cell inner membrane. In terms of biological role, cell division protein that is involved in the assembly of the Z ring. May serve as a membrane anchor for the Z ring. The sequence is that of Cell division protein FtsA from Borreliella burgdorferi (strain ATCC 35210 / DSM 4680 / CIP 102532 / B31) (Borrelia burgdorferi).